Consider the following 668-residue polypeptide: DNA ligase (668 aa).

Residues 37 to 41 (DAIYD), 86 to 87 (SL), and Glu-116 contribute to the NAD(+) site. Residue Lys-118 is the N6-AMP-lysine intermediate of the active site. NAD(+)-binding residues include Arg-139, Glu-176, Lys-289, and Lys-313. Cys-407, Cys-410, Cys-425, and Cys-430 together coordinate Zn(2+). Residues 586 to 668 (AQSSALAGLT…RALIETREMP (83 aa)) enclose the BRCT domain.

The protein belongs to the NAD-dependent DNA ligase family. LigA subfamily. It depends on Mg(2+) as a cofactor. Mn(2+) serves as cofactor.

It catalyses the reaction NAD(+) + (deoxyribonucleotide)n-3'-hydroxyl + 5'-phospho-(deoxyribonucleotide)m = (deoxyribonucleotide)n+m + AMP + beta-nicotinamide D-nucleotide.. Functionally, DNA ligase that catalyzes the formation of phosphodiester linkages between 5'-phosphoryl and 3'-hydroxyl groups in double-stranded DNA using NAD as a coenzyme and as the energy source for the reaction. It is essential for DNA replication and repair of damaged DNA. In Gloeobacter violaceus (strain ATCC 29082 / PCC 7421), this protein is DNA ligase.